The chain runs to 494 residues: MTDLTTLTIAQARDALITKKLKATELTEAYLKAIELANPTLNAYVTITAEQARKMAAESDRRLAKGERGLLEGIPLGIKDLFATHGVHTQACSNILDGFKPNYESTITANLWQDGAVMLGKLNMDEFAMGSSNETSYYGPVISPWRKKDSNEKLVPGGSSGGSAAAVAAQICAGATATDTGGSIRQPAAFTGTVGIKPTYGRCSRWGVVAFASSLDQAGPIARDVRDCAILLRSMASFDEKDSTSVNLPVPDYESYLGKSIKGMKIGIPKEYYLAGMSQEIIDLWQKGINWLKEAGAEIRDISLPHTKYALPSYYIIAPAEASSNLARYDGVRFGLRVPGKDIIEMYENTRSVGFGDEVKRRILIGTYVLSSGYYDAGYLRAQKVRTLVKRDFDQCFDSGVDAILTPATPTPAFGIADEKIKNDAVAMYLNDIFTVPVNMAGLPGISVPAGLSSNGLPLGLQLIGKPFAEEVIFQIAHIIEQEAGIFCAKKWWI.

Catalysis depends on charge relay system residues Lys-79 and Ser-159. The active-site Acyl-ester intermediate is Ser-183.

It belongs to the amidase family. GatA subfamily. Heterotrimer of A, B and C subunits.

It carries out the reaction L-glutamyl-tRNA(Gln) + L-glutamine + ATP + H2O = L-glutaminyl-tRNA(Gln) + L-glutamate + ADP + phosphate + H(+). In terms of biological role, allows the formation of correctly charged Gln-tRNA(Gln) through the transamidation of misacylated Glu-tRNA(Gln) in organisms which lack glutaminyl-tRNA synthetase. The reaction takes place in the presence of glutamine and ATP through an activated gamma-phospho-Glu-tRNA(Gln). In Bartonella tribocorum (strain CIP 105476 / IBS 506), this protein is Glutamyl-tRNA(Gln) amidotransferase subunit A.